Consider the following 419-residue polypeptide: MSRYLFSSESVTEGHPDKICDQISDTILDALLTQDPRSRVAAEVVVNTGMVVVTGEITTTANVNFTKLVRDKIREIGYTEADNGFSADSCAVFLALDEQSPEIAQGVSCALEVRTSEEDALDRIGAGDQGLMFGFACTETPELMPLPISVAHRLTRRLAQVRKDGTLAYLKPDGKAQVTVEYERKDGVDRPGRIDTILISTQHAAVIDDLSDNDAVQARIKADLQTHVIGPVFADLDIRPDAQTRLLVNPSGRFVIGGPQGDSGLTGRKIIVDTYGGYARHGGGAFSGKDPTKVDRSAAYAARYVAKNIVAAELADRCEVQVAYAIGVARPVSIFVETFGTGRVSDEALMLLVREHFDLRPAAILRDFDLCRLPAQRGGRFYQDVAAYGHLGRPDLDLPWEHTDKAATLKQAIQTAAAV.

Position 15 (His15) interacts with ATP. Position 17 (Asp17) interacts with Mg(2+). Glu43 is a K(+) binding site. L-methionine is bound by residues Glu56 and Gln99. The tract at residues 99–109 is flexible loop; that stretch reads QSPEIAQGVSC. Residues 173-175, 253-254, Asp262, 268-269, Ala285, and Lys289 each bind ATP; these read DGK, RF, and RK. Residue Asp262 coordinates L-methionine. An L-methionine-binding site is contributed by Lys293.

This sequence belongs to the AdoMet synthase family. Homotetramer; dimer of dimers. The cofactor is Mg(2+). Requires K(+) as cofactor.

It localises to the cytoplasm. It catalyses the reaction L-methionine + ATP + H2O = S-adenosyl-L-methionine + phosphate + diphosphate. The protein operates within amino-acid biosynthesis; S-adenosyl-L-methionine biosynthesis; S-adenosyl-L-methionine from L-methionine: step 1/1. In terms of biological role, catalyzes the formation of S-adenosylmethionine (AdoMet) from methionine and ATP. The overall synthetic reaction is composed of two sequential steps, AdoMet formation and the subsequent tripolyphosphate hydrolysis which occurs prior to release of AdoMet from the enzyme. The chain is S-adenosylmethionine synthase from Gloeobacter violaceus (strain ATCC 29082 / PCC 7421).